The chain runs to 422 residues: Probable protein phosphatase 2C 43 (422 aa).

The region spanning 117-393 (SSGSYADKGD…DNVTVVVICF (277 aa)) is the PPM-type phosphatase domain. Residues Asp163, Gly164, Asp341, and Asp384 each coordinate Mn(2+).

This sequence belongs to the PP2C family. It depends on Mg(2+) as a cofactor. Mn(2+) is required as a cofactor.

It catalyses the reaction O-phospho-L-seryl-[protein] + H2O = L-seryl-[protein] + phosphate. It carries out the reaction O-phospho-L-threonyl-[protein] + H2O = L-threonyl-[protein] + phosphate. The polypeptide is Probable protein phosphatase 2C 43 (Arabidopsis thaliana (Mouse-ear cress)).